Reading from the N-terminus, the 278-residue chain is NAD kinase (278 aa).

Aspartate 67 acts as the Proton acceptor in catalysis. NAD(+) is bound by residues 67 to 68, arginine 72, 137 to 138, lysine 148, arginine 165, aspartate 167, 178 to 183, and glutamine 237; these read DG, NE, and TGYALS.

The protein belongs to the NAD kinase family. It depends on a divalent metal cation as a cofactor.

The protein localises to the cytoplasm. The catalysed reaction is NAD(+) + ATP = ADP + NADP(+) + H(+). Involved in the regulation of the intracellular balance of NAD and NADP, and is a key enzyme in the biosynthesis of NADP. Catalyzes specifically the phosphorylation on 2'-hydroxyl of the adenosine moiety of NAD to yield NADP. This chain is NAD kinase, found in Thermococcus gammatolerans (strain DSM 15229 / JCM 11827 / EJ3).